A 327-amino-acid polypeptide reads, in one-letter code: Nucleotide-binding protein Mflv_3714 (327 aa).

A compositionally biased stretch (basic and acidic residues) spans 1–22 (MTRQGMRDDLRGEADSVVHDGT). The disordered stretch occupies residues 1 to 29 (MTRQGMRDDLRGEADSVVHDGTDDIDNEN). 50–57 (GLSGAGRG) is an ATP binding site. GTP is bound at residue 101 to 104 (DVRS).

This sequence belongs to the RapZ-like family.

Its function is as follows. Displays ATPase and GTPase activities. This is Nucleotide-binding protein Mflv_3714 from Mycolicibacterium gilvum (strain PYR-GCK) (Mycobacterium gilvum (strain PYR-GCK)).